A 135-amino-acid polypeptide reads, in one-letter code: Cofilin-4 (135 aa).

The ADF-H domain occupies 3-135; it reads SCASINDEVI…SQSLVEERCK (133 aa).

It belongs to the actin-binding proteins ADF family.

It localises to the cytoplasm. Its subcellular location is the cytoskeleton. Functionally, controls actin polymerization and depolymerization. In Dictyostelium discoideum (Social amoeba), this protein is Cofilin-4 (cofE).